We begin with the raw amino-acid sequence, 39 residues long: Photosystem II reaction center protein J (39 aa).

The helical transmembrane segment at I7–F27 threads the bilayer.

The protein belongs to the PsbJ family. As to quaternary structure, PSII is composed of 1 copy each of membrane proteins PsbA, PsbB, PsbC, PsbD, PsbE, PsbF, PsbH, PsbI, PsbJ, PsbK, PsbL, PsbM, PsbT, PsbX, PsbY, PsbZ, Psb30/Ycf12, peripheral proteins PsbO, CyanoQ (PsbQ), PsbU, PsbV and a large number of cofactors. It forms dimeric complexes.

The protein localises to the cellular thylakoid membrane. One of the components of the core complex of photosystem II (PSII). PSII is a light-driven water:plastoquinone oxidoreductase that uses light energy to abstract electrons from H(2)O, generating O(2) and a proton gradient subsequently used for ATP formation. It consists of a core antenna complex that captures photons, and an electron transfer chain that converts photonic excitation into a charge separation. In Synechococcus sp. (strain ATCC 27144 / PCC 6301 / SAUG 1402/1) (Anacystis nidulans), this protein is Photosystem II reaction center protein J.